A 28-amino-acid polypeptide reads, in one-letter code: C-hordein (28 aa).

Residues 1–28 (RQLNPSSQELQSPQQSYLQQPYPQNPYL) are disordered.

In terms of tissue distribution, developing endosperm.

Its function is as follows. Sulfur-poor seed storage protein. This chain is C-hordein, found in Hordeum vulgare subsp. spontaneum (Wild barley).